The chain runs to 210 residues: Dephospho-CoA kinase (210 aa).

The DPCK domain occupies 4 to 202 (WVGLTGGIGS…AFYSGIFASK (199 aa)). 12 to 17 (GSGKSA) serves as a coordination point for ATP.

This sequence belongs to the CoaE family.

It is found in the cytoplasm. It catalyses the reaction 3'-dephospho-CoA + ATP = ADP + CoA + H(+). It participates in cofactor biosynthesis; coenzyme A biosynthesis; CoA from (R)-pantothenate: step 5/5. Catalyzes the phosphorylation of the 3'-hydroxyl group of dephosphocoenzyme A to form coenzyme A. The sequence is that of Dephospho-CoA kinase from Neisseria gonorrhoeae.